Consider the following 129-residue polypeptide: Large ribosomal subunit protein bL20 (129 aa).

The protein belongs to the bacterial ribosomal protein bL20 family.

Functionally, binds directly to 23S ribosomal RNA and is necessary for the in vitro assembly process of the 50S ribosomal subunit. It is not involved in the protein synthesizing functions of that subunit. The polypeptide is Large ribosomal subunit protein bL20 (Mycobacterium sp. (strain JLS)).